A 121-amino-acid chain; its full sequence is Two-component response regulator ORR8 (121 aa).

Residues 5–121 (HVLVVDDTHV…VDVPRIMKYI (117 aa)) form the Response regulatory domain. At D55 the chain carries 4-aspartylphosphate.

Belongs to the ARR family. Type-A subfamily. In terms of processing, two-component system major event consists of a His-to-Asp phosphorelay between a sensor histidine kinase (HK) and a response regulator (RR). In plants, the His-to-Asp phosphorelay involves an additional intermediate named Histidine-containing phosphotransfer protein (HPt). This multistep phosphorelay consists of a His-Asp-His-Asp sequential transfer of a phosphate group between first a His and an Asp of the HK protein, followed by the transfer to a conserved His of the HPt protein and finally the transfer to an Asp in the receiver domain of the RR protein. In terms of tissue distribution, expressed in mature leaves, and at low levels in roots, shoots and flowers.

Its function is as follows. Functions as a response regulator involved in His-to-Asp phosphorelay signal transduction system. Phosphorylation of the Asp residue in the receiver domain activates the ability of the protein to promote the transcription of target genes. Type-A response regulators seem to act as negative regulators of the cytokinin signaling. This is Two-component response regulator ORR8 from Oryza sativa subsp. indica (Rice).